We begin with the raw amino-acid sequence, 273 residues long: GDNF family receptor alpha-4 (273 aa).

N-linked (GlcNAc...) asparagine glycosylation occurs at N192. A lipid anchor (GPI-anchor amidated asparagine) is attached at N250. The propeptide at 251–273 is removed in mature form; sequence AGCCFLWVSSMSILTALALQALL.

This sequence belongs to the GDNFR family. Interacts with ARTN ligand and RET: forms a 2:2:2 ternary complex composed of ARTN ligand, GFRA3 and RET receptor. Interacts with SORL1. In terms of tissue distribution, weakly expressed in heart, brain and testis.

Its subcellular location is the cell membrane. The protein resides in the secreted. Functionally, receptor for persephin (PSPN), a growth factor that exhibits neurotrophic activity on mesencephalic dopaminergic and motor neurons. Acts by binding to its coreceptor, GFRA4, leading to autophosphorylation and activation of the RET receptor. May be important in C-cell development and, in the postnatal development of the adrenal medulla. The sequence is that of GDNF family receptor alpha-4 (Gfra4) from Rattus norvegicus (Rat).